The chain runs to 161 residues: Phosphopantetheine adenylyltransferase (161 aa).

Thr-10 is a substrate binding site. ATP contacts are provided by residues 10–11 (TF) and His-18. The substrate site is built by Lys-42, Leu-74, and Arg-88. ATP is bound by residues 89 to 91 (GIR), Glu-99, and 124 to 130 (WRYLSST).

Belongs to the bacterial CoaD family. As to quaternary structure, homohexamer. Mg(2+) serves as cofactor.

It is found in the cytoplasm. It catalyses the reaction (R)-4'-phosphopantetheine + ATP + H(+) = 3'-dephospho-CoA + diphosphate. It participates in cofactor biosynthesis; coenzyme A biosynthesis; CoA from (R)-pantothenate: step 4/5. Functionally, reversibly transfers an adenylyl group from ATP to 4'-phosphopantetheine, yielding dephospho-CoA (dPCoA) and pyrophosphate. The polypeptide is Phosphopantetheine adenylyltransferase (Haemophilus ducreyi (strain 35000HP / ATCC 700724)).